Reading from the N-terminus, the 204-residue chain is CASP-like protein 2A1 (204 aa).

The segment covering 1 to 11 (MEKSNDHDKAS) has biased composition (basic and acidic residues). Positions 1–25 (MEKSNDHDKASHGGSGGGATEKWEE) are disordered. Topologically, residues 1–32 (MEKSNDHDKASHGGSGGGATEKWEETSPGIRT) are cytoplasmic. The chain crosses the membrane as a helical span at residues 33-53 (AETMLRLAPVGLCVAALVVML). Over 54 to 74 (KDSETNEFGSISYSNLTAFRY) the chain is Extracellular. N-linked (GlcNAc...) asparagine glycosylation is present at Asn-68. The chain crosses the membrane as a helical span at residues 75 to 95 (LVHANGICAGYSLLSAAIAAM). Over 96–113 (PRSSSTMPRVWTFFCLDQ) the chain is Cytoplasmic. A helical transmembrane segment spans residues 114-134 (LLTYLVLAAGAVSAEVLYLAY). The Extracellular segment spans residues 135–155 (NGDSAITWSDACSSYGGFCHR). The helical transmembrane segment at 156–176 (ATASVIITFFVVCFYILLSLI) threads the bilayer. Residues 177–204 (SSYKLFTRFDPPSIVDSDKTLEVAVFGS) are Cytoplasmic-facing.

It belongs to the Casparian strip membrane proteins (CASP) family. As to quaternary structure, homodimer and heterodimers.

The protein localises to the cell membrane. This chain is CASP-like protein 2A1, found in Arabidopsis lyrata subsp. lyrata (Lyre-leaved rock-cress).